Reading from the N-terminus, the 436-residue chain is UDP-N-acetylmuramate--L-alanine ligase (436 aa).

108–114 (GAHGKTS) is an ATP binding site.

This sequence belongs to the MurCDEF family.

Its subcellular location is the cytoplasm. The catalysed reaction is UDP-N-acetyl-alpha-D-muramate + L-alanine + ATP = UDP-N-acetyl-alpha-D-muramoyl-L-alanine + ADP + phosphate + H(+). It functions in the pathway cell wall biogenesis; peptidoglycan biosynthesis. In terms of biological role, cell wall formation. The sequence is that of UDP-N-acetylmuramate--L-alanine ligase from Bacillus cereus (strain G9842).